The sequence spans 517 residues: GMP synthase [glutamine-hydrolyzing] (517 aa).

Positions 9–199 (RILILDFGSQ…VLGVCGCERL (191 aa)) constitute a Glutamine amidotransferase type-1 domain. Catalysis depends on cysteine 86, which acts as the Nucleophile. Catalysis depends on residues histidine 173 and glutamate 175. Residues 200–392 (WTSESIIEDA…LGLPYEMLYR (193 aa)) enclose the GMPS ATP-PPase domain. 227-233 (SGGVDSS) is an ATP binding site.

Homodimer.

It carries out the reaction XMP + L-glutamine + ATP + H2O = GMP + L-glutamate + AMP + diphosphate + 2 H(+). It participates in purine metabolism; GMP biosynthesis; GMP from XMP (L-Gln route): step 1/1. Functionally, catalyzes the synthesis of GMP from XMP. This is GMP synthase [glutamine-hydrolyzing] from Vibrio vulnificus (strain YJ016).